Consider the following 987-residue polypeptide: Ephrin type-B receptor 2 (987 aa).

The signal sequence occupies residues 1 to 19 (MGPLWFCCLPLALLPLLAA). Residues 20–544 (VEETLMDSTT…QTSVQEKLPL (525 aa)) are Extracellular-facing. Positions 21 to 203 (EETLMDSTTA…FYRKCPRVIQ (183 aa)) constitute an Eph LBD domain. Cystine bridges form between Cys63/Cys185 and Cys98/Cys108. Residues Asn266, Asn337, Asn429, Asn478, and Asn483 are each glycosylated (N-linked (GlcNAc...) asparagine). 2 Fibronectin type-III domains span residues 325–435 (IPSA…TNQA) and 436–531 (APSA…TMTE). The chain crosses the membrane as a helical span at residues 545–565 (IIGSSAAGLVFLIAVVVIIIV). Residues 566–987 (CNRRGFERAD…QMNQIQSVEV (422 aa)) lie on the Cytoplasmic side of the membrane. Residues 622 to 885 (VKIEQVIGAG…QIVNTLDKMI (264 aa)) form the Protein kinase domain. ATP contacts are provided by residues 628–636 (IGAGEFGEV) and Lys654. The Proton acceptor role is filled by Asp747. Lys892 participates in a covalent cross-link: Glycyl lysine isopeptide (Lys-Gly) (interchain with G-Cter in ubiquitin). The 65-residue stretch at 914–978 (TSFNTVDEWL…LNSIQVMRAQ (65 aa)) folds into the SAM domain. Positions 985-987 (VEV) match the PDZ-binding motif.

Belongs to the protein kinase superfamily. Tyr protein kinase family. Ephrin receptor subfamily. Heterotetramer upon binding of the ligand. The heterotetramer is composed of an ephrin dimer and a receptor dimer. Oligomerization is probably required to induce biological responses. Ligand binding induces cleavage by matrix metalloproteinases (MMPs) such as MMP7/MMP9, producing an EphB2/N-terminal fragment (NTF) and a C-terminal long fragment (EphB2-LF). EphB2-LF is further cleaved by MMPs, producing EphB2/CTF1 which is further cleaved by the PS1/gamma-secretase producing EphB2/CTF2. Post-translationally, polyubiquitinated; ligand binding stimulates ubiquitination. Ubiquitinated by RNF186 at Lys-892, mainly through 'Lys-27'-linked polyubiquitin chains.

The protein localises to the cell membrane. Its subcellular location is the cell projection. It is found in the axon. The protein resides in the dendrite. It catalyses the reaction L-tyrosyl-[protein] + ATP = O-phospho-L-tyrosyl-[protein] + ADP + H(+). In terms of biological role, receptor tyrosine kinase which binds promiscuously transmembrane ephrin-B family ligands residing on adjacent cells, leading to contact-dependent bidirectional signaling into neighboring cells. The signaling pathway downstream of the receptor is referred to as forward signaling while the signaling pathway downstream of the ephrin ligand is referred to as reverse signaling. Functions in axon guidance during development. In addition to axon guidance, also regulates dendritic spines development and maturation and stimulates the formation of excitatory synapses. The sequence is that of Ephrin type-B receptor 2 (EPHB2) from Coturnix japonica (Japanese quail).